A 637-amino-acid polypeptide reads, in one-letter code: Probable ATP-binding protein YheS (637 aa).

2 consecutive ABC transporter domains span residues 2–246 and 313–527; these read IVFS…AQQQ and LKME…KQEN. ATP contacts are provided by residues 34–41 and 345–352; these read GKNGCGKS and GRNGAGKS. Positions 523-559 are disordered; sequence QKQENQTDEAPKENANSAQARKDQKRREAELRAQTQP. The span at 542-553 shows a compositional bias: basic and acidic residues; sequence ARKDQKRREAEL.

This sequence belongs to the ABC transporter superfamily. ABCF family. YheS subfamily.

Genetic data indicate it may be involved in ribosome assembly or function. The sequence is that of Probable ATP-binding protein YheS (yheS) from Escherichia coli O157:H7.